The sequence spans 152 residues: Transcriptional regulator MraZ (152 aa).

SpoVT-AbrB domains lie at 5 to 52 (ASAV…PLNQ) and 81 to 124 (ATEC…SESE).

This sequence belongs to the MraZ family. In terms of assembly, forms oligomers.

The protein localises to the cytoplasm. The protein resides in the nucleoid. The sequence is that of Transcriptional regulator MraZ from Histophilus somni (strain 129Pt) (Haemophilus somnus).